An 809-amino-acid chain; its full sequence is Bifunctional enzyme MurC/Ddl (809 aa).

The segment at 1–450 (MKGTPQYHFI…GEALKDFNPK (450 aa)) is UDP-N-acetylmuramate--alanine ligase. Residues 111 to 117 (GSHGKTG) and 606 to 661 (IETF…SREI) each bind ATP. Residues 451-809 (KLSIGLVCGG…FTKEQDLVKR (359 aa)) are D-alanine--D-alanine ligase. The ATP-grasp domain occupies 573 to 784 (KRIASAVGVP…QEQIVDHFII (212 aa)). The Mg(2+) site is built by aspartate 738, glutamate 751, and asparagine 753.

In the N-terminal section; belongs to the MurCDEF family. It in the C-terminal section; belongs to the D-alanine--D-alanine ligase family. Mg(2+) serves as cofactor. Requires Mn(2+) as cofactor.

It localises to the cytoplasm. The enzyme catalyses UDP-N-acetyl-alpha-D-muramate + L-alanine + ATP = UDP-N-acetyl-alpha-D-muramoyl-L-alanine + ADP + phosphate + H(+). The catalysed reaction is 2 D-alanine + ATP = D-alanyl-D-alanine + ADP + phosphate + H(+). It participates in cell wall biogenesis; peptidoglycan biosynthesis. In terms of biological role, cell wall formation. This Chlamydia pneumoniae (Chlamydophila pneumoniae) protein is Bifunctional enzyme MurC/Ddl (murC/ddl).